The chain runs to 107 residues: FK506-binding protein 1 (107 aa).

One can recognise a PPIase FKBP-type domain in the interval 19–107; sequence GSNVTVHHAG…VFEVELITFK (89 aa).

This sequence belongs to the FKBP-type PPIase family.

It carries out the reaction [protein]-peptidylproline (omega=180) = [protein]-peptidylproline (omega=0). Inhibited by both FK506 and rapamycin. Functionally, PPIases accelerate the folding of proteins by catalyzing the cis-trans isomerization of proline imidic peptide bonds in oligopeptides. The chain is FK506-binding protein 1 (fkbp1) from Dictyostelium discoideum (Social amoeba).